Reading from the N-terminus, the 79-residue chain is MDVQRSSYIFIALSIIAMFLITGVKPEVRDICPGVCHAGIEPDCDTLCISMGFTGGYCQGLTCCCNPKSSKSSIINRPI.

Residues 1–26 form the signal peptide; that stretch reads MDVQRSSYIFIALSIIAMFLITGVKP. 4 disulfides stabilise this stretch: cysteine 32-cysteine 65, cysteine 36-cysteine 58, cysteine 44-cysteine 63, and cysteine 48-cysteine 64.

The protein belongs to the DEFL family.

The protein localises to the secreted. In Arabidopsis thaliana (Mouse-ear cress), this protein is Putative defensin-like protein 80 (LCR81).